We begin with the raw amino-acid sequence, 127 residues long: Glycine cleavage system H protein 2 (127 aa).

A Lipoyl-binding domain is found at 24-105 (SVTVGISDHA…PYGSWIFKLK (82 aa)). Position 65 is an N6-lipoyllysine (Lys65).

The protein belongs to the GcvH family. As to quaternary structure, the glycine cleavage system is composed of four proteins: P, T, L and H. It depends on (R)-lipoate as a cofactor.

In terms of biological role, the glycine cleavage system catalyzes the degradation of glycine. The H protein shuttles the methylamine group of glycine from the P protein to the T protein. The sequence is that of Glycine cleavage system H protein 2 from Pseudomonas putida (strain ATCC 47054 / DSM 6125 / CFBP 8728 / NCIMB 11950 / KT2440).